Consider the following 555-residue polypeptide: Putative protein NRT1/ PTR FAMILY 2.14 (555 aa).

12 consecutive transmembrane segments (helical) span residues 62 to 82 (VTLINTWSALTNFAPIIGAFI), 93 to 113 (IVFGSIAELLGMLVLTFTSLV), 135 to 155 (YSQLYVLLSGLFLLSVGTGGI), 181 to 201 (FFSWYYTTHTIVQLVSMTLVL), 209 to 229 (WGIGFAIPTVLNFFALLLLFV), 234 to 254 (YVFVKPEGSVFSGVFKVLVAA), 319 to 339 (IKSIISIIPIFASSIIGFLAM), 363 to 383 (LIPPASITVISLLNIGIWLPF), 405 to 425 (LQKVGIGNIFSISTMLISGIV), 441 to 461 (VFWLTPQQVLMGFYQVFTIVG), 480 to 500 (SLLYLGLSLASYLSSAMVSIV), and 523 to 543 (CFYYFIAALSTLNFIFFFWCA).

This sequence belongs to the major facilitator superfamily. Proton-dependent oligopeptide transporter (POT/PTR) (TC 2.A.17) family. In terms of tissue distribution, not detected.

The protein resides in the membrane. In Arabidopsis thaliana (Mouse-ear cress), this protein is Putative protein NRT1/ PTR FAMILY 2.14 (NPF2.14).